Reading from the N-terminus, the 880-residue chain is Alanine--tRNA ligase (880 aa).

The Zn(2+) site is built by His-567, His-571, Cys-669, and His-673.

The protein belongs to the class-II aminoacyl-tRNA synthetase family. Zn(2+) is required as a cofactor.

It localises to the cytoplasm. It catalyses the reaction tRNA(Ala) + L-alanine + ATP = L-alanyl-tRNA(Ala) + AMP + diphosphate. Functionally, catalyzes the attachment of alanine to tRNA(Ala) in a two-step reaction: alanine is first activated by ATP to form Ala-AMP and then transferred to the acceptor end of tRNA(Ala). Also edits incorrectly charged Ser-tRNA(Ala) and Gly-tRNA(Ala) via its editing domain. The protein is Alanine--tRNA ligase of Bacillus mycoides (strain KBAB4) (Bacillus weihenstephanensis).